A 595-amino-acid polypeptide reads, in one-letter code: Protein LUTEIN DEFICIENT 5, chloroplastic (595 aa).

Residues 1–28 (MAMAFPLSYTPTITVKPVTYSRRSNFVV) constitute a chloroplast transit peptide. Cys516 serves as a coordination point for heme.

It belongs to the cytochrome P450 family. Heme serves as cofactor.

The protein resides in the plastid. The protein localises to the chloroplast. In terms of biological role, heme-containing cytochrome P450 involved in the biosynthesis of xanthophylls. Specific for beta-ring hydroxylation of alpha- and beta-carotene. Also has a low activity toward the epsilon-rings of alpha-carotene. The beta-ring of alpha-carotene is the preferred substrate in planta. The polypeptide is Protein LUTEIN DEFICIENT 5, chloroplastic (CYP97A3) (Arabidopsis thaliana (Mouse-ear cress)).